We begin with the raw amino-acid sequence, 648 residues long: Threonine--tRNA ligase (648 aa).

One can recognise a TGS domain in the interval M1–T61. Positions D242 to P540 are catalytic. Residues C336, H387, and H517 each contribute to the Zn(2+) site.

This sequence belongs to the class-II aminoacyl-tRNA synthetase family. Homodimer. Zn(2+) is required as a cofactor.

It is found in the cytoplasm. The catalysed reaction is tRNA(Thr) + L-threonine + ATP = L-threonyl-tRNA(Thr) + AMP + diphosphate + H(+). Catalyzes the attachment of threonine to tRNA(Thr) in a two-step reaction: L-threonine is first activated by ATP to form Thr-AMP and then transferred to the acceptor end of tRNA(Thr). Also edits incorrectly charged L-seryl-tRNA(Thr). The sequence is that of Threonine--tRNA ligase from Streptococcus equi subsp. zooepidemicus (strain H70).